The chain runs to 106 residues: CLAVATA3/ESR (CLE)-related protein 21 (106 aa).

An N-terminal signal peptide occupies residues 1 to 31 (MLILSSRYAMKRDVLIIVIFTVLVLIIISRS). An N-linked (GlcNAc...) asparagine glycan is attached at N47. A compositionally biased stretch (basic residues) spans 72-82 (KVRRRSSRFRR). Residues 72–106 (KVRRRSSRFRRKTDGDEEEEEKRSIPTGPNPLHNK) form a disordered region. Residues P97 and P100 each carry the hydroxyproline modification. A glycan (O-linked (Ara...) hydroxyproline) is linked at P100.

The protein belongs to the CLV3/ESR signal peptide family. In terms of processing, the O-glycosylation (arabinosylation) of the hydroxyproline Pro-100 enhances binding affinity of the CLE21p peptide for its receptor. Mostly expressed in leaves and apex, and, to a lower extent, in seedlings, flowers, stems and siliques.

It is found in the secreted. Its subcellular location is the extracellular space. Functionally, extracellular signal peptide that regulates cell fate. Represses root apical meristem maintenance. Regulates the transition of protophloem cells from proliferation to differentiation, thus impinging on postembryonic growth capacity of the root meristem; this signaling pathway requires CRN and CLV2. This Arabidopsis thaliana (Mouse-ear cress) protein is CLAVATA3/ESR (CLE)-related protein 21.